The chain runs to 2883 residues: Bifunctional DNA-directed RNA polymerase subunit beta-beta' (2883 aa).

The tract at residues 1–1377 is DNA-directed RNA polymerase subunit beta; that stretch reads MPTTLKSGNR…DVTVYGETEE (1377 aa). Residues 1382-2883 are DNA-directed RNA polymerase subunit beta'; the sequence is PMPIKEDDRP…IRIKEKTEGA (1502 aa). Positions 1447, 1449, 1462, and 1465 each coordinate Zn(2+). Mg(2+)-binding residues include D1846, D1848, and D1850. Zn(2+) is bound by residues C2176, C2250, C2257, and C2260.

In the N-terminal section; belongs to the RNA polymerase beta chain family. The protein in the C-terminal section; belongs to the RNA polymerase beta' chain family. As to quaternary structure, the RNAP catalytic core consists of 2 alpha, 1 beta/beta' and 1 omega subunit. When a sigma factor is associated with the core the holoenzyme is formed, which can initiate transcription. The cofactor is Mg(2+). Requires Zn(2+) as cofactor.

The enzyme catalyses RNA(n) + a ribonucleoside 5'-triphosphate = RNA(n+1) + diphosphate. Functionally, DNA-dependent RNA polymerase catalyzes the transcription of DNA into RNA using the four ribonucleoside triphosphates as substrates. The sequence is that of Bifunctional DNA-directed RNA polymerase subunit beta-beta' (rpoBC) from Wolinella succinogenes (strain ATCC 29543 / DSM 1740 / CCUG 13145 / JCM 31913 / LMG 7466 / NCTC 11488 / FDC 602W) (Vibrio succinogenes).